Here is a 123-residue protein sequence, read N- to C-terminus: Large ribosomal subunit protein bL17 (123 aa).

Belongs to the bacterial ribosomal protein bL17 family. In terms of assembly, part of the 50S ribosomal subunit. Contacts protein L32.

This is Large ribosomal subunit protein bL17 from Borreliella afzelii (strain PKo) (Borrelia afzelii).